The sequence spans 140 residues: ISDra2 transposase TnpA (140 aa).

Positions 67 and 69 each coordinate Mg(2+). Positions 127–133 (AQIQKYI) are mobile alpha helix. Y132 acts as the Nucleophile in catalysis. Residue Q136 coordinates Mg(2+).

The protein belongs to the transposase 17 family. In terms of assembly, homodimer. Requires Mg(2+) as cofactor.

Its activity is regulated as follows. Both the excision and insertion steps are inhibited by TnpB. Functionally, a transposase that is part of insertion sequence (IS) element ISDra2, it is necessary and sufficient for both transposon excision and insertion of ISDra2. This protein alone can be provided in trans and allows transposition of an empty IS element (tnpA or tnpA-tnpB replaced by a selectable marker). ISDra2 binds subterminal imperfect palindromes at the left (LE) and right (RE) ends of the element and cleaves only the 'top strand' which is circularized and subsequently reinserted into the DNA target. This is called a 'peel and paste' mechanism and increases the copy number of the IS. Transposition is linked to DNA replication in the absence of irradiation, with maximal activity when the 'top strand' is on the replication lagging strand, and occurs preferentially on the lagging strand. The IS element inserts 3' of the target sequence 5'-TTGAT-3'; target duplication has not been observed. This is ISDra2 transposase TnpA from Deinococcus radiodurans (strain ATCC 13939 / DSM 20539 / JCM 16871 / CCUG 27074 / LMG 4051 / NBRC 15346 / NCIMB 9279 / VKM B-1422 / R1).